Consider the following 379-residue polypeptide: Epoxyqueuosine reductase (379 aa).

The Proton donor role is filled by aspartate 140. Positions 184–214 (FEPDTPASDLCGSCNQCVKACPTGSLLGEGK) constitute a 4Fe-4S ferredoxin-type domain. 8 residues coordinate [4Fe-4S] cluster: cysteine 194, cysteine 197, cysteine 200, cysteine 204, cysteine 220, cysteine 246, cysteine 249, and cysteine 253. An HEAT-like PBS-type repeat occupies 307–332 (QRNAIIILARYKDKTAVPDLIDCLQN).

It belongs to the QueG family. As to quaternary structure, monomer. It depends on cob(II)alamin as a cofactor. Requires [4Fe-4S] cluster as cofactor.

The protein resides in the cytoplasm. The catalysed reaction is epoxyqueuosine(34) in tRNA + AH2 = queuosine(34) in tRNA + A + H2O. The protein operates within tRNA modification; tRNA-queuosine biosynthesis. In terms of biological role, catalyzes the conversion of epoxyqueuosine (oQ) to queuosine (Q), which is a hypermodified base found in the wobble positions of tRNA(Asp), tRNA(Asn), tRNA(His) and tRNA(Tyr). This Listeria monocytogenes serovar 1/2a (strain ATCC BAA-679 / EGD-e) protein is Epoxyqueuosine reductase.